The sequence spans 732 residues: Putative pectinesterase/pectinesterase inhibitor 28 (732 aa).

The chain crosses the membrane as a helical span at residues valine 17–valine 37. 4 N-linked (GlcNAc...) asparagine glycosylation sites follow: asparagine 40, asparagine 93, asparagine 278, and asparagine 297. The segment at threonine 51–methionine 204 is pectinesterase inhibitor 28. The segment at aspartate 252 to aspartate 548 is pectinesterase 28. Substrate contacts are provided by threonine 327 and glutamine 357. The active-site Proton donor; for pectinesterase activity is the aspartate 380. A disulfide bridge connects residues cysteine 394 and cysteine 414. The active-site Nucleophile; for pectinesterase activity is the aspartate 401. Residue asparagine 413 is glycosylated (N-linked (GlcNAc...) asparagine). Positions 469 and 471 each coordinate substrate. 3 N-linked (GlcNAc...) asparagine glycosylation sites follow: asparagine 566, asparagine 570, and asparagine 581. 2 stretches are compositionally biased toward low complexity: residues asparagine 570–serine 620 and proline 633–glycine 732. The interval asparagine 570–glycine 732 is disordered.

In the N-terminal section; belongs to the PMEI family. This sequence in the C-terminal section; belongs to the pectinesterase family. Expressed in flower buds.

It localises to the membrane. The catalysed reaction is [(1-&gt;4)-alpha-D-galacturonosyl methyl ester](n) + n H2O = [(1-&gt;4)-alpha-D-galacturonosyl](n) + n methanol + n H(+). Its pathway is glycan metabolism; pectin degradation; 2-dehydro-3-deoxy-D-gluconate from pectin: step 1/5. Functionally, acts in the modification of cell walls via demethylesterification of cell wall pectin. This chain is Putative pectinesterase/pectinesterase inhibitor 28 (PME28), found in Arabidopsis thaliana (Mouse-ear cress).